The following is a 347-amino-acid chain: MNPLILIMIMLTVILGTTIVMMSSHWLMIWMGFEMNMLAVIPLLMKQYNPRSMEAATKYFLTQATASMLLMLAIIINLLYSGQWTFTKLMNPTASIIMTLAMAMKMGLAPLHFWVPEVTQGISLSSGLILLTWQKLAPLSVLYVISPGINLDLILLMSMMSIAIGGWGGLNQTQLRKILAYSSIAHMGWMASILAFNPTMTLLNLLLYILMTTTTFMLFMATSATTTLSLSHMWNKMPLITSSTLTIMLSLGGLPPLVGFLPKWMIIQELTKNNNITLATLMAITALLNLFFYMRLTYATSLTMFPTMNNMKIKWQFNNKKQMKYLPMLIILSTITLPLAPAITLLN.

Helical transmembrane passes span 3–23 (PLIL…VMMS), 25–45 (HWLM…PLLM), 59–79 (YFLT…INLL), 96–116 (IIMT…FWVP), 148–170 (GINL…WGGL), 178–198 (ILAY…AFNP), 200–220 (MTLL…MLFM), 247–267 (IMLS…WMII), 276–296 (ITLA…YMRL), and 326–346 (LPML…ITLL).

The protein belongs to the complex I subunit 2 family. In terms of assembly, core subunit of respiratory chain NADH dehydrogenase (Complex I) which is composed of 45 different subunits. Interacts with TMEM242.

Its subcellular location is the mitochondrion inner membrane. The enzyme catalyses a ubiquinone + NADH + 5 H(+)(in) = a ubiquinol + NAD(+) + 4 H(+)(out). In terms of biological role, core subunit of the mitochondrial membrane respiratory chain NADH dehydrogenase (Complex I) which catalyzes electron transfer from NADH through the respiratory chain, using ubiquinone as an electron acceptor. Essential for the catalytic activity and assembly of complex I. This chain is NADH-ubiquinone oxidoreductase chain 2, found in Saccopteryx leptura (Lesser sac-winged bat).